A 367-amino-acid polypeptide reads, in one-letter code: Probable butyrate kinase (367 aa).

It belongs to the acetokinase family.

It is found in the cytoplasm. It catalyses the reaction butanoate + ATP = butanoyl phosphate + ADP. This chain is Probable butyrate kinase, found in Bacillus cytotoxicus (strain DSM 22905 / CIP 110041 / 391-98 / NVH 391-98).